Consider the following 557-residue polypeptide: Polypyrimidine tract-binding protein 1 (557 aa).

Methionine 1 carries the N-acetylmethionine modification. At serine 16 the chain carries Phosphoserine. RRM domains lie at 59-143, 184-260, and 363-437; these read RVIH…SSPN, LRII…FSKL, and SVLL…LSKH. Residue lysine 65 forms a Glycyl lysine isopeptide (Lys-Gly) (interchain with G-Cter in SUMO2) linkage. Tyrosine 127 carries the post-translational modification Phosphotyrosine. Position 138 is a phosphothreonine (threonine 138). Phosphoserine is present on serine 141. Lysine 218 is covalently cross-linked (Glycyl lysine isopeptide (Lys-Gly) (interchain with G-Cter in SUMO2)). Residue serine 459 is modified to Phosphoserine. The region spanning 480–555 is the RRM 4 domain; the sequence is ATLHLSNIPP…HHLRVSFSKS (76 aa).

Monomer. Part of a ternary complex containing KHSRP, PTBP1, PTBP2 and HNRPH1. Interacts with RAVER1 and SFPQ.

It localises to the nucleus. In terms of biological role, plays a role in pre-mRNA splicing and in the regulation of alternative splicing events. Activates exon skipping of its own pre-mRNA during muscle cell differentiation. Binds to the polypyrimidine tract of introns. May promote RNA looping when bound to two separate polypyrimidine tracts in the same pre-mRNA. May promote the binding of U2 snRNP to pre-mRNA. Cooperates with RAVER1 to modulate switching between mutually exclusive exons during maturation of the TPM1 pre-mRNA. Represses the splicing of MAPT/Tau exon 10. Binds to polypyrimidine-rich controlling element (PCE) of CFTR and promotes exon skipping of CFTR exon 9, thereby antagonizing TIA1 and its role in exon inclusion of CFTR exon 9. Plays a role in the splicing of pyruvate kinase PKM by binding repressively to a polypyrimidine tract flanking PKM exon 9, inhibiting exon 9 inclusion and resulting in exon 10 inclusion and production of the PKM M2 isoform. The protein is Polypyrimidine tract-binding protein 1 (PTBP1) of Sus scrofa (Pig).